The primary structure comprises 451 residues: Trigger factor (451 aa).

The PPIase FKBP-type domain occupies 171–256 (GDRVKVNFKG…ATAIEAPEDK (86 aa)).

Belongs to the FKBP-type PPIase family. Tig subfamily.

Its subcellular location is the cytoplasm. It catalyses the reaction [protein]-peptidylproline (omega=180) = [protein]-peptidylproline (omega=0). In terms of biological role, involved in protein export. Acts as a chaperone by maintaining the newly synthesized protein in an open conformation. Functions as a peptidyl-prolyl cis-trans isomerase. In Bradyrhizobium sp. (strain ORS 278), this protein is Trigger factor.